The following is a 413-amino-acid chain: Protein esc1 (413 aa).

Residues 1-22 show a composition bias toward polar residues; that stretch reads MSSYALPSMQPTPTSSIPLRQM. 2 disordered regions span residues 1–202 and 230–265; these read MSSY…NQPS and MYVPQQQTSHSSGASYQNESANPPVQSPMQYSYSQG. Over residues 23–42 the composition is skewed to low complexity; it reads SQPTTSAPSNSASSTPYSPQ. The segment covering 43 to 63 has biased composition (polar residues); sequence QVPLTHNSYPLSTPSSFQHGQ. Composition is skewed to low complexity over residues 86–103 and 116–126; these read SAAPASSSPTSATLSTAA and SSSSYVYSVPP. The span at 127-136 shows a compositional bias: polar residues; the sequence is TNSTTSQASA. Low complexity predominate over residues 150 to 197; it reads STTLTPSTTDSSSTDVSSSDSVSTSASSSNASNTVSVTSPASSSATPL. Positions 334 to 385 constitute a bHLH domain; that stretch reads ELRTSHKLAERKRRKEIKELFDDLKDALPLDKSTKSSKWGLLTRAIQYIEQL.

As to quaternary structure, efficient DNA binding requires dimerization with another bHLH protein.

Its subcellular location is the nucleus. Involved in the sexual differentiation process. Modulate the ability of the cell to differentiate in response to the nitrogen starvation signal; in particular in response to decreases in the level of cellular cAMP. This Schizosaccharomyces pombe (strain 972 / ATCC 24843) (Fission yeast) protein is Protein esc1 (esc1).